The chain runs to 163 residues: MRQFQSFSTTVERELAAAPTARPARTAAGYDEPENFLEVEVRDPRTHFPHGDSNRGMYTDYLVVCRTNLPSFPQRVSQVRRRYSDFEFFKRCLFKELSLSAHPRVVIPALPGKILWARRFHDEVIEERREGLAQWLSTVAGHPLLQSGSKVLVRFLQDEVFNG.

One can recognise a PX domain in the interval 39–162 (VEVRDPRTHF…VRFLQDEVFN (124 aa)). Arg82, Ser84, Lys113, Arg119, and Arg128 together coordinate a 1,2-diacyl-sn-glycero-3-phospho-(1D-myo-inositol-3-phosphate).

The protein belongs to the sorting nexin family.

Its subcellular location is the cytoplasm. It is found in the golgi apparatus membrane. The protein localises to the prevacuolar compartment membrane. Its function is as follows. Required for retention of late Golgi membrane proteins. Component of the retrieval machinery that functions by direct interaction with the cytosolic tails of certain TGN membrane proteins during the sorting/budding process at the prevacuolar compartment. Binds phosphatidylinositol 3-phosphate (PtdIns(P3)). The polypeptide is Sorting nexin-3 (SNX3) (Eremothecium gossypii (strain ATCC 10895 / CBS 109.51 / FGSC 9923 / NRRL Y-1056) (Yeast)).